The chain runs to 129 residues: Large ribosomal subunit protein bL19c (129 aa).

Belongs to the bacterial ribosomal protein bL19 family.

It is found in the plastid. This is Large ribosomal subunit protein bL19c from Prototheca wickerhamii.